Reading from the N-terminus, the 154-residue chain is Myoglobin (154 aa).

Positions 2–148 constitute a Globin domain; the sequence is VLSDAEWQLV…FRKDIAAKYK (147 aa). At Ser4 the chain carries Phosphoserine. His65 contributes to the nitrite binding site. His65 lines the O2 pocket. Thr68 is subject to Phosphothreonine. Residue His94 participates in heme b binding.

It belongs to the globin family. Monomeric.

It is found in the cytoplasm. The protein resides in the sarcoplasm. It carries out the reaction Fe(III)-heme b-[protein] + nitric oxide + H2O = Fe(II)-heme b-[protein] + nitrite + 2 H(+). The catalysed reaction is H2O2 + AH2 = A + 2 H2O. Its function is as follows. Monomeric heme protein which primary function is to store oxygen and facilitate its diffusion within muscle tissues. Reversibly binds oxygen through a pentacoordinated heme iron and enables its timely and efficient release as needed during periods of heightened demand. Depending on the oxidative conditions of tissues and cells, and in addition to its ability to bind oxygen, it also has a nitrite reductase activity whereby it regulates the production of bioactive nitric oxide. Under stress conditions, like hypoxia and anoxia, it also protects cells against reactive oxygen species thanks to its pseudoperoxidase activity. This chain is Myoglobin (MB), found in Eschrichtius robustus (California gray whale).